Reading from the N-terminus, the 493-residue chain is Stage V sporulation protein AF (493 aa).

A run of 5 helical transmembrane segments spans residues 296–316, 334–354, 363–383, 387–407, and 418–438; these read FFGI…VLQP, IPII…RMAA, TAMG…VGLF, VILY…YELS, and MILV…VLII.

This sequence belongs to the GerABKA family.

It localises to the cell membrane. This is Stage V sporulation protein AF (spoVAF) from Bacillus subtilis (strain 168).